We begin with the raw amino-acid sequence, 356 residues long: ADP-ribosylhydrolase ARH3 (356 aa).

5 residues coordinate Mg(2+): Asp26, Glu33, Thr62, Asp63, and Asp64. Asp63 serves as a coordination point for substrate. Substrate-binding positions include 132 to 138, His168, and Ile260; that span reads KGSYGNG. Mg(2+)-binding residues include Asp303, Asp305, and Thr306.

This sequence belongs to the ADP-ribosylglycohydrolase family. In terms of assembly, monomer. Mg(2+) serves as cofactor. Requires Mn(2+) as cofactor.

The protein localises to the nucleus. Its subcellular location is the cytoplasm. It localises to the chromosome. The protein resides in the mitochondrion matrix. The enzyme catalyses [(1''-&gt;2')-ADP-alpha-D-ribose](n) + H2O = [(1''-&gt;2')-ADP-alpha-D-ribose](n-1) + ADP-D-ribose. The catalysed reaction is 1''-O-acetyl-ADP-alpha-D-ribose + H2O = ADP-D-ribose + acetate + H(+). It catalyses the reaction O-(ADP-D-ribosyl)-L-seryl-[protein] + H2O = ADP-D-ribose + L-seryl-[protein]. It carries out the reaction alpha-NAD(+) + H2O = ADP-D-ribose + nicotinamide + H(+). The protein undergoes a dramatic conformational switch from closed to open states upon substrate-binding, which enables specific substrate recognition for the 1''-O-linkage. The glutamate flap (Glu-33) blocks substrate entrance to Mg(2+) in the unliganded closed state. In presence of substrate, Glu-33 is ejected from the active site: this closed-to-open transition significantly widens the substrate-binding channel and precisely positions the scissile 1''-O-linkage for cleavage while securing tightly 2'- and 3'-hydroxyls of ADP-ribose. Activity is inhibited by calcium. In terms of biological role, ADP-ribosylhydrolase that preferentially hydrolyzes the scissile alpha-O-linkage attached to the anomeric C1'' position of ADP-ribose and acts on different substrates, such as proteins ADP-ribosylated on serine and threonine, free poly(ADP-ribose) and O-acetyl-ADP-D-ribose. Specifically acts as a serine mono-ADP-ribosylhydrolase by mediating the removal of mono-ADP-ribose attached to serine residues on proteins, thereby playing a key role in DNA damage response. Serine ADP-ribosylation of proteins constitutes the primary form of ADP-ribosylation of proteins in response to DNA damage. Does not hydrolyze ADP-ribosyl-arginine, -cysteine, -diphthamide, or -asparagine bonds. Also able to degrade protein free poly(ADP-ribose), which is synthesized in response to DNA damage: free poly(ADP-ribose) acts as a potent cell death signal and its degradation by ADPRHL2 protects cells from poly(ADP-ribose)-dependent cell death, a process named parthanatos. Also hydrolyzes free poly(ADP-ribose) in mitochondria. Specifically digests O-acetyl-ADP-D-ribose, a product of deacetylation reactions catalyzed by sirtuins. Specifically degrades 1''-O-acetyl-ADP-D-ribose isomer, rather than 2''-O-acetyl-ADP-D-ribose or 3''-O-acetyl-ADP-D-ribose isomers. The sequence is that of ADP-ribosylhydrolase ARH3 (adprs) from Latimeria chalumnae (Coelacanth).